The sequence spans 70 residues: Small ribosomal subunit protein bS21 (70 aa).

Belongs to the bacterial ribosomal protein bS21 family.

The chain is Small ribosomal subunit protein bS21 from Nautilia profundicola (strain ATCC BAA-1463 / DSM 18972 / AmH).